A 487-amino-acid chain; its full sequence is Beta-barrel assembly-enhancing protease (487 aa).

The N-terminal stretch at 1–27 (MFRQLKKNLVATLIAALALGQVAPAFA) is a signal peptide. Histidine 136 is a Zn(2+) binding site. Residue glutamate 137 is part of the active site. The Zn(2+) site is built by histidine 140 and glutamate 201. Aspartate 205 acts as the Proton donor in catalysis. TPR repeat units lie at residues 309 to 342 (HAAQYGRALQAMEASKYDEARKTLQPLLSAEPNN) and 427 to 460 (DQELAARAESYALAGRLDQAISLLSSASAQAKLG).

This sequence belongs to the peptidase M48 family. BepA subfamily. Zn(2+) serves as cofactor.

It is found in the periplasm. Its function is as follows. Functions both as a chaperone and a metalloprotease. Maintains the integrity of the outer membrane by promoting either the assembly or the elimination of outer membrane proteins, depending on their folding state. The sequence is that of Beta-barrel assembly-enhancing protease from Salmonella typhi.